The following is a 71-amino-acid chain: Large ribosomal subunit protein uL29 (71 aa).

Belongs to the universal ribosomal protein uL29 family.

The protein is Large ribosomal subunit protein uL29 of Rickettsia akari (strain Hartford).